A 263-amino-acid polypeptide reads, in one-letter code: Endonuclease 8 (263 aa).

The active-site Schiff-base intermediate with DNA is the P2. Catalysis depends on E3, which acts as the Proton donor. Residue K53 is the Proton donor; for beta-elimination activity of the active site. Q70, R125, and N169 together coordinate DNA. The segment at 229–263 (KVFHREGESCERCGGTIERTMLSSRPFYWCPHCQS) adopts an FPG-type zinc-finger fold. Catalysis depends on R253, which acts as the Proton donor; for delta-elimination activity.

This sequence belongs to the FPG family. The cofactor is Zn(2+).

It carries out the reaction 2'-deoxyribonucleotide-(2'-deoxyribose 5'-phosphate)-2'-deoxyribonucleotide-DNA = a 3'-end 2'-deoxyribonucleotide-(2,3-dehydro-2,3-deoxyribose 5'-phosphate)-DNA + a 5'-end 5'-phospho-2'-deoxyribonucleoside-DNA + H(+). In terms of biological role, involved in base excision repair of DNA damaged by oxidation or by mutagenic agents. Acts as a DNA glycosylase that recognizes and removes damaged bases. Has a preference for oxidized pyrimidines, such as thymine glycol, 5,6-dihydrouracil and 5,6-dihydrothymine. Has AP (apurinic/apyrimidinic) lyase activity and introduces nicks in the DNA strand. Cleaves the DNA backbone by beta-delta elimination to generate a single-strand break at the site of the removed base with both 3'- and 5'-phosphates. In Pectobacterium atrosepticum (strain SCRI 1043 / ATCC BAA-672) (Erwinia carotovora subsp. atroseptica), this protein is Endonuclease 8.